The chain runs to 550 residues: CTP synthase (550 aa).

An amidoligase domain region spans residues 1-270 (MTKFVFVTGG…DRLICEELRL (270 aa)). Residue Ser13 coordinates CTP. Position 13 (Ser13) interacts with UTP. Residues 14–19 (SLGKGI) and Asp71 contribute to the ATP site. Residues Asp71 and Glu144 each contribute to the Mg(2+) site. CTP-binding positions include 151–153 (DIE), 191–196 (KTKPTQ), and Lys227. Residues 191–196 (KTKPTQ) and Lys227 contribute to the UTP site. A Glutamine amidotransferase type-1 domain is found at 295-547 (TIGMVGKYVD…VEAALASQQR (253 aa)). Residue Gly356 coordinates L-glutamine. The Nucleophile; for glutamine hydrolysis role is filled by Cys383. L-glutamine contacts are provided by residues 384-387 (LGMQ), Glu407, and Arg473. Residues His520 and Glu522 contribute to the active site.

The protein belongs to the CTP synthase family. As to quaternary structure, homotetramer.

It carries out the reaction UTP + L-glutamine + ATP + H2O = CTP + L-glutamate + ADP + phosphate + 2 H(+). The catalysed reaction is L-glutamine + H2O = L-glutamate + NH4(+). The enzyme catalyses UTP + NH4(+) + ATP = CTP + ADP + phosphate + 2 H(+). The protein operates within pyrimidine metabolism; CTP biosynthesis via de novo pathway; CTP from UDP: step 2/2. With respect to regulation, allosterically activated by GTP, when glutamine is the substrate; GTP has no effect on the reaction when ammonia is the substrate. The allosteric effector GTP functions by stabilizing the protein conformation that binds the tetrahedral intermediate(s) formed during glutamine hydrolysis. Inhibited by the product CTP, via allosteric rather than competitive inhibition. In terms of biological role, catalyzes the ATP-dependent amination of UTP to CTP with either L-glutamine or ammonia as the source of nitrogen. Regulates intracellular CTP levels through interactions with the four ribonucleotide triphosphates. The chain is CTP synthase from Cupriavidus necator (strain ATCC 17699 / DSM 428 / KCTC 22496 / NCIMB 10442 / H16 / Stanier 337) (Ralstonia eutropha).